The primary structure comprises 234 residues: Ras-related protein Rab-20 (234 aa).

Residues Gly-17, Lys-18, Thr-19, Asp-32, and Thr-36 each contribute to the GTP site. Thr-19 serves as a coordination point for Mg(2+). 2 short sequence motifs (switch) span residues 28 to 41 (RRFP…GGAF) and 55 to 72 (DTAG…YCRG). 2 residues coordinate Mg(2+): Thr-36 and Asp-55. GTP contacts are provided by Gly-58, Asn-113, Lys-114, and Asp-116. Residues 125-144 (GQEKEECSPNMDAGDRVSPR) form a disordered region. Basic and acidic residues predominate over residues 126–142 (QEKEECSPNMDAGDRVS). Positions 184 and 185 each coordinate GTP. A disordered region spans residues 212–234 (RPSHTVDISSHKPPKRTRSGCCA). Positions 223 to 234 (KPPKRTRSGCCA) are enriched in basic residues. Residues Cys-232 and Cys-233 are each lipidated (S-geranylgeranyl cysteine).

This sequence belongs to the small GTPase superfamily. Rab family. Mg(2+) is required as a cofactor. As to expression, low or absent expression in normal pancreas and stronger expression in 15 of 18 exocrine pancreatic adenocarcinomas (at protein level).

It is found in the golgi apparatus. It localises to the cytoplasmic vesicle. The protein localises to the phagosome. The protein resides in the phagosome membrane. The catalysed reaction is GTP + H2O = GDP + phosphate + H(+). Its activity is regulated as follows. Regulated by guanine nucleotide exchange factors (GEFs) which promote the exchange of bound GDP for free GTP. Regulated by GTPase activating proteins (GAPs) which increase the GTP hydrolysis activity. Inhibited by GDP dissociation inhibitors (GDIs). In terms of biological role, the small GTPases Rab are key regulators of intracellular membrane trafficking, from the formation of transport vesicles to their fusion with membranes. Rabs cycle between an inactive GDP-bound form and an active GTP-bound form that is able to recruit to membranes different sets of downstream effectors directly responsible for vesicle formation, movement, tethering and fusion. RAB20 plays a role in apical endocytosis/recycling. Plays a role in the maturation and acidification of phagosomes that engulf pathogens, such as S.aureus and M.tuberculosis. Plays a role in the fusion of phagosomes with lysosomes. The chain is Ras-related protein Rab-20 from Homo sapiens (Human).